A 162-amino-acid polypeptide reads, in one-letter code: Heat shock protein beta-6 (162 aa).

Positions 1–72 (MEIPVPVQPS…PTAQVSTDSG (72 aa)) are involved in stabilization of the HSPB1:HSBP6 heterodimer. Ser-16 carries the post-translational modification Phosphoserine. One can recognise a sHSP domain in the interval 56–162 (RAPSVALPTA…AQLPSPPAAK (107 aa)). Deamidated glutamine is present on Gln-66. Position 157 is a phosphoserine (Ser-157).

The protein belongs to the small heat shock protein (HSP20) family. In terms of assembly, homodimer. Small heat shock proteins form high molecular mass oligomers containing variable number of monomers; these oligomers display a very flexible quaternary structure easily exchanging their subunits. Heterooligomer with HSPB1; formed through oligomerization of HSPB1:HSBP6 dimers; subunit exchange leads to formation of at least two different heterooligomeric complexes, differing in variable quantities of HSPB1 and HSPB6 homodimers in addition to HSPB1:HSPB6 heterodimers. Heterooligomer with CRYAB; large heterooligomers consist of CRYAB homodimers and HSPB5:HSPB6 heterodimers but lacking HSPB6 homodimers. Interacts with BAG3. Interacts (phosphorylated) with YWHAZ. Interacts with PDE4A and PDE4D; required for maintenance of the non-phosphorylated state of HSPB6 under basal conditions. Interacts with KDR. Interacts with PRKD1. In terms of processing, phosphorylated at Ser-16 by PKA and probably PKD1K; required to protect cardiomyocytes from apoptosis.

It localises to the cytoplasm. Its subcellular location is the nucleus. It is found in the secreted. Small heat shock protein which functions as a molecular chaperone probably maintaining denatured proteins in a folding-competent state. Seems to have versatile functions in various biological processes. Plays a role in regulating muscle function such as smooth muscle vasorelaxation and cardiac myocyte contractility. May regulate myocardial angiogenesis implicating KDR. Overexpression mediates cardioprotection and angiogenesis after induced damage. Stabilizes monomeric YWHAZ thereby supporting YWHAZ chaperone-like activity. This Mus musculus (Mouse) protein is Heat shock protein beta-6 (Hspb6).